Reading from the N-terminus, the 508-residue chain is Pyruvate kinase (508 aa).

A substrate-binding site is contributed by arginine 56. Residues asparagine 58, serine 60, aspartate 90, and threonine 91 each coordinate K(+). 58-61 (NFSH) contacts ATP. Residues arginine 97 and lysine 185 each coordinate ATP. Residue glutamate 251 coordinates Mg(2+). Substrate is bound by residues glycine 274, aspartate 275, and threonine 307. Mg(2+) is bound at residue aspartate 275.

It belongs to the pyruvate kinase family. In terms of assembly, homotetramer. It depends on Mg(2+) as a cofactor. K(+) is required as a cofactor.

The catalysed reaction is pyruvate + ATP = phosphoenolpyruvate + ADP + H(+). Its pathway is carbohydrate degradation; glycolysis; pyruvate from D-glyceraldehyde 3-phosphate: step 5/5. Regulated by phosphoenolpyruvate substrate and is allosterically activated by ribose-5-phosphate, AMP and other nucleoside monophosphates but not by fructose-1,6-bisphosphate. This Mycoplasma genitalium (strain ATCC 33530 / DSM 19775 / NCTC 10195 / G37) (Mycoplasmoides genitalium) protein is Pyruvate kinase (pyk).